A 266-amino-acid chain; its full sequence is Undecaprenyl-diphosphatase (266 aa).

Helical transmembrane passes span 4–24 (WLIA…PVSS), 46–66 (VLIQ…RLWG), 82–102 (IGIL…HDFI), 105–125 (VLYE…FILL), 142–162 (YPLK…VPGV), 182–202 (AAEF…AYDL), 216–236 (LIGI…KTVL), and 244–264 (FAPF…LLYI).

This sequence belongs to the UppP family.

It localises to the cell inner membrane. It catalyses the reaction di-trans,octa-cis-undecaprenyl diphosphate + H2O = di-trans,octa-cis-undecaprenyl phosphate + phosphate + H(+). Catalyzes the dephosphorylation of undecaprenyl diphosphate (UPP). Confers resistance to bacitracin. This chain is Undecaprenyl-diphosphatase, found in Caulobacter vibrioides (strain ATCC 19089 / CIP 103742 / CB 15) (Caulobacter crescentus).